The primary structure comprises 79 residues: Putative membrane protein insertion efficiency factor (79 aa).

The protein belongs to the UPF0161 family.

The protein localises to the cell inner membrane. In terms of biological role, could be involved in insertion of integral membrane proteins into the membrane. The protein is Putative membrane protein insertion efficiency factor of Bacteroides thetaiotaomicron (strain ATCC 29148 / DSM 2079 / JCM 5827 / CCUG 10774 / NCTC 10582 / VPI-5482 / E50).